The sequence spans 278 residues: Translation initiation factor IF-3, mitochondrial (278 aa).

The N-terminal 31 residues, 1 to 31 (MAALFLKRLTLQTVKSENSCIRCFGKHILQK), are a transit peptide targeting the mitochondrion. Residues 249-278 (KAYKETQETQERDTLNKDHGNDKESNVLHQ) are disordered.

Belongs to the IF-3 family.

The protein resides in the mitochondrion. In terms of biological role, IF-3 binds to the 28S ribosomal subunit and shifts the equilibrium between 55S ribosomes and their 39S and 28S subunits in favor of the free subunits, thus enhancing the availability of 28S subunits on which protein synthesis initiation begins. In Homo sapiens (Human), this protein is Translation initiation factor IF-3, mitochondrial (MTIF3).